The primary structure comprises 192 residues: Ion-translocating oxidoreductase complex subunit A (192 aa).

6 helical membrane-spanning segments follow: residues 5 to 25 (LLLLISTVLVNNFVLVKFLGL), 39 to 59 (IGMSMATTFVLTLASILSYLV), 65 to 85 (LPFDLSYLRTMSFILVIAVVV), 102 to 122 (ALGIYLPLITTNCAVLGVALL), 134 to 154 (AIYGFGAALGFSLVLILFSAM), and 171 to 191 (AIAMITAGLMSLAFMGFTGLV).

Belongs to the NqrDE/RnfAE family. As to quaternary structure, the complex is composed of six subunits: RnfA, RnfB, RnfC, RnfD, RnfE and RnfG.

It localises to the cell inner membrane. Functionally, part of a membrane-bound complex that couples electron transfer with translocation of ions across the membrane. This is Ion-translocating oxidoreductase complex subunit A from Shewanella baltica (strain OS185).